The following is a 305-amino-acid chain: Lysosomal thioesterase PPT2 (305 aa).

Positions 1–32 (MLGLPERRLPSAEFLLLLPFLLLLLLLLPAAP) are cleaved as a signal peptide. 2 disulfides stabilise this stretch: Cys112–Cys120 and Cys168–Cys179. Ser114 functions as the Nucleophile in the catalytic mechanism. The N-linked (GlcNAc...) asparagine glycan is linked to Asn193. Catalysis depends on residues Asp231 and His286. A disulfide bridge connects residues Cys279 and Cys299.

Belongs to the palmitoyl-protein thioesterase family.

Its subcellular location is the lysosome. The catalysed reaction is hexadecanoyl-CoA + H2O = hexadecanoate + CoA + H(+). The enzyme catalyses S-hexadecanoyl-N-acetylcysteamine + H2O = N-acetylcysteamine + hexadecanoate + H(+). Its function is as follows. Catalyzes the cleavage of thioester bonds from S-palmitoyl-CoA or S-palmitoyl-N-acetylcysteamine (unbranched structures) but does not have activity against palmitoylcysteine or palmitoylated proteins, branched structures or bulky head groups. Conversely, hydrolyzes both long and short chain fatty acyl-CoA substrate. In Bos taurus (Bovine), this protein is Lysosomal thioesterase PPT2 (PPT2).